A 399-amino-acid chain; its full sequence is Phosphoglycerate kinase (399 aa).

Substrate contacts are provided by residues 21 to 23, Arg-36, 59 to 62, Arg-120, and Arg-158; these read DFN and HLGR. Residues Lys-209, Gly-297, Glu-328, and 355–358 each bind ATP; that span reads GGDS.

The protein belongs to the phosphoglycerate kinase family. Monomer.

Its subcellular location is the cytoplasm. The catalysed reaction is (2R)-3-phosphoglycerate + ATP = (2R)-3-phospho-glyceroyl phosphate + ADP. It participates in carbohydrate degradation; glycolysis; pyruvate from D-glyceraldehyde 3-phosphate: step 2/5. This is Phosphoglycerate kinase from Streptococcus thermophilus (strain CNRZ 1066).